The following is a 257-amino-acid chain: MALAKRIIPCLDVDKGRVVKGVNFVDIRDAGDPVEVARRYNEQGADEITFLDITASSESRDTTYETVERMAAEVFIPLTVGGGVRTVDDIRKLLNAGADKVSINTAAVFNPEFVREAAERFGRQCIVVAIDAKRVSAAGEEPRWEIFTHGGRKPTGLDAVEWAKKMVELGAGELLLTSMDRDGTKIGFDLGLTRAISDAVVVPVIASGGVGELQHLADGVTQGGADAVLAASIFHFGQHTIPEAKAFMKAQGIEVRD.

Residues aspartate 12 and aspartate 131 contribute to the active site.

It belongs to the HisA/HisF family. As to quaternary structure, heterodimer of HisH and HisF.

Its subcellular location is the cytoplasm. It carries out the reaction 5-[(5-phospho-1-deoxy-D-ribulos-1-ylimino)methylamino]-1-(5-phospho-beta-D-ribosyl)imidazole-4-carboxamide + L-glutamine = D-erythro-1-(imidazol-4-yl)glycerol 3-phosphate + 5-amino-1-(5-phospho-beta-D-ribosyl)imidazole-4-carboxamide + L-glutamate + H(+). It participates in amino-acid biosynthesis; L-histidine biosynthesis; L-histidine from 5-phospho-alpha-D-ribose 1-diphosphate: step 5/9. IGPS catalyzes the conversion of PRFAR and glutamine to IGP, AICAR and glutamate. The HisF subunit catalyzes the cyclization activity that produces IGP and AICAR from PRFAR using the ammonia provided by the HisH subunit. In Marinobacter nauticus (strain ATCC 700491 / DSM 11845 / VT8) (Marinobacter aquaeolei), this protein is Imidazole glycerol phosphate synthase subunit HisF.